The primary structure comprises 706 residues: B-cell lymphoma 6 protein (706 aa).

A BTB domain is found at 32 to 99 (TDVVIVVSRE…MYTSRLNLRE (68 aa)). The interval 317 to 349 (EPPNAPLNRKGLVSPQSPQKSDCQPNSPTESCS) is disordered. Over residues 330 to 349 (SPQSPQKSDCQPNSPTESCS) the composition is skewed to polar residues. Ser333 and Ser343 each carry phosphoserine; by MAPK1. Residue Ser361 is modified to Phosphoserine. Residues 376 to 379 (KKYK) are required for interaction with NuRD complex and for transcriptional repressor activity. Lys379 is subject to N6-acetyllysine. Ser404 is subject to Phosphoserine. The interval 407–467 (AYTAPPACQP…PRSSSESHSP (61 aa)) is disordered. Polar residues predominate over residues 424–456 (DLQSPTKLSASGEDSTIPQASRLNNIVNRSMTG). Positions 457 to 466 (SPRSSSESHS) are enriched in low complexity. C2H2-type zinc fingers lie at residues 518–541 (FFCN…LQTH), 546–568 (YKCD…KTVH), 574–596 (YRCN…TRIH), 602–624 (YKCE…VLIH), 630–652 (YPCE…LRIH), and 658–681 (YHCE…RQKH).

Homodimer. Interacts (via BTB domain) with the corepressors BCOR, NCOR1 and SMRT/NCOR2; the interactions are direct. Forms preferably ternary complexes with BCOR and SMRT/NCOR2 on target gene promoters but, on enhancer elements, interacts with SMRT/NCOR2 and HDAC3 to repress proximal gene expression. Interacts with histone deacetylases HDAC2, HDAC5 and HDAC9 (via the catalytic domain). Interacts with ZBTB7 and BCL6B. Interacts with SCF(FBXO11) complex; the interaction is independent of phosphorylation and promotes ubiquitination. Interacts (when phosphorylated) with PIN1; the interaction is required for BCL6 degradation upon genotoxic stress. Interacts with ZBTB17; inhibits ZBTB17 transcriptional activity. Interacts with CTBP1, autoinhibits its transcriptional expression. Interacts with NOTCH1 NCID and SIRT1; leads to a epigenetic repression of selective NOTCH1-target genes. Interacts (nor via BTB domain neither acetylated) with the NuRD complex components CHD4, HDAC1, MBD3 and MTA3; the interaction with MTA3 inhibits BCL6 acetylation and is required for BCL6 transpriptional repression. Phosphorylated by MAPK1 in response to antigen receptor activation at Ser-333 and Ser-343. Phosphorylated by ATM in response to genotoxic stress. Phosphorylation induces its degradation by ubiquitin/proteasome pathway. Post-translationally, polyubiquitinated. Polyubiquitinated by SCF(FBXO11), leading to its degradation by the proteasome. Ubiquitinated by the SCF(FBXL17) complex, leading to its degradation by the proteasome: ubiquitination by the SCF(FBXL17) complex takes place when aberrant BTB domain dimers are formed. In terms of processing, acetylated at Lys-379 by EP300 which inhibits the interaction with NuRD complex and the transcriptional repressor function. Deacetylated by HDAC- and SIR2-dependent pathways. As to expression, expressed in germinal center T- and B-cells and in primary immature dendritic cells.

It localises to the nucleus. Its function is as follows. Transcriptional repressor mainly required for germinal center (GC) formation and antibody affinity maturation which has different mechanisms of action specific to the lineage and biological functions. Forms complexes with different corepressors and histone deacetylases to repress the transcriptional expression of different subsets of target genes. Represses its target genes by binding directly to the DNA sequence 5'-TTCCTAGAA-3' (BCL6-binding site) or indirectly by repressing the transcriptional activity of transcription factors. In GC B-cells, represses genes that function in differentiation, inflammation, apoptosis and cell cycle control, also autoregulates its transcriptional expression and up-regulates, indirectly, the expression of some genes important for GC reactions, such as AICDA, through the repression of microRNAs expression, like miR155. An important function is to allow GC B-cells to proliferate very rapidly in response to T-cell dependent antigens and tolerate the physiological DNA breaks required for immunglobulin class switch recombination and somatic hypermutation without inducing a p53/TP53-dependent apoptotic response. In follicular helper CD4(+) T-cells (T(FH) cells), promotes the expression of T(FH)-related genes but inhibits the differentiation of T(H)1, T(H)2 and T(H)17 cells. Also required for the establishment and maintenance of immunological memory for both T- and B-cells. Suppresses macrophage proliferation through competition with STAT5 for STAT-binding motifs binding on certain target genes, such as CCL2 and CCND2. In response to genotoxic stress, controls cell cycle arrest in GC B-cells in both p53/TP53-dependedent and -independent manners. Besides, also controls neurogenesis through the alteration of the composition of NOTCH-dependent transcriptional complexes at selective NOTCH targets, such as HES5, including the recruitment of the deacetylase SIRT1 and resulting in an epigenetic silencing leading to neuronal differentiation. The chain is B-cell lymphoma 6 protein (BCL6) from Homo sapiens (Human).